An 880-amino-acid polypeptide reads, in one-letter code: Alanine--tRNA ligase (880 aa).

Residues H548, H552, C651, and H655 each contribute to the Zn(2+) site.

Belongs to the class-II aminoacyl-tRNA synthetase family. Zn(2+) is required as a cofactor.

The protein resides in the cytoplasm. The enzyme catalyses tRNA(Ala) + L-alanine + ATP = L-alanyl-tRNA(Ala) + AMP + diphosphate. Functionally, catalyzes the attachment of alanine to tRNA(Ala) in a two-step reaction: alanine is first activated by ATP to form Ala-AMP and then transferred to the acceptor end of tRNA(Ala). Also edits incorrectly charged Ser-tRNA(Ala) and Gly-tRNA(Ala) via its editing domain. This Tropheryma whipplei (strain TW08/27) (Whipple's bacillus) protein is Alanine--tRNA ligase.